Consider the following 150-residue polypeptide: Large ribosomal subunit protein bL9 (150 aa).

The protein belongs to the bacterial ribosomal protein bL9 family.

In terms of biological role, binds to the 23S rRNA. The polypeptide is Large ribosomal subunit protein bL9 (Acidovorax ebreus (strain TPSY) (Diaphorobacter sp. (strain TPSY))).